The following is a 97-amino-acid chain: Aspartyl/glutamyl-tRNA(Asn/Gln) amidotransferase subunit C (97 aa).

The protein belongs to the GatC family. As to quaternary structure, heterotrimer of A, B and C subunits.

The enzyme catalyses L-glutamyl-tRNA(Gln) + L-glutamine + ATP + H2O = L-glutaminyl-tRNA(Gln) + L-glutamate + ADP + phosphate + H(+). It catalyses the reaction L-aspartyl-tRNA(Asn) + L-glutamine + ATP + H2O = L-asparaginyl-tRNA(Asn) + L-glutamate + ADP + phosphate + 2 H(+). Allows the formation of correctly charged Asn-tRNA(Asn) or Gln-tRNA(Gln) through the transamidation of misacylated Asp-tRNA(Asn) or Glu-tRNA(Gln) in organisms which lack either or both of asparaginyl-tRNA or glutaminyl-tRNA synthetases. The reaction takes place in the presence of glutamine and ATP through an activated phospho-Asp-tRNA(Asn) or phospho-Glu-tRNA(Gln). The protein is Aspartyl/glutamyl-tRNA(Asn/Gln) amidotransferase subunit C of Prochlorococcus marinus (strain MIT 9313).